Consider the following 313-residue polypeptide: Methionyl-tRNA formyltransferase (313 aa).

110–113 provides a ligand contact to (6S)-5,6,7,8-tetrahydrofolate; it reads SLLP.

Belongs to the Fmt family.

The enzyme catalyses L-methionyl-tRNA(fMet) + (6R)-10-formyltetrahydrofolate = N-formyl-L-methionyl-tRNA(fMet) + (6S)-5,6,7,8-tetrahydrofolate + H(+). In terms of biological role, attaches a formyl group to the free amino group of methionyl-tRNA(fMet). The formyl group appears to play a dual role in the initiator identity of N-formylmethionyl-tRNA by promoting its recognition by IF2 and preventing the misappropriation of this tRNA by the elongation apparatus. The sequence is that of Methionyl-tRNA formyltransferase from Lysinibacillus sphaericus (strain C3-41).